The primary structure comprises 41 residues: Hemoglobin subunit beta (41 aa).

The Globin domain occupies 1 to 41 (LGNVLVCVLAHHFGKEFTPQVQAAYQKVVAGVANALAHKYH). At Lys-39 the chain carries N6-acetyllysine.

It belongs to the globin family. As to quaternary structure, heterotetramer of two alpha chains and two beta chains. As to expression, red blood cells.

In terms of biological role, involved in oxygen transport from the lung to the various peripheral tissues. The chain is Hemoglobin subunit beta (HBB) from Colobus guereza (Mantled guereza).